Consider the following 431-residue polypeptide: Adenylosuccinate synthetase (431 aa).

Residues 12–18 (GDEGKGK) and 40–42 (GHT) each bind GTP. Residue aspartate 13 is the Proton acceptor of the active site. Positions 13 and 40 each coordinate Mg(2+). IMP contacts are provided by residues 13–16 (DEGK), 38–41 (NAGH), threonine 131, arginine 145, glutamine 225, threonine 240, and arginine 304. The Proton donor role is filled by histidine 41. 300–306 (TTTGRKR) is a substrate binding site. GTP is bound by residues arginine 306, 332–334 (KLD), and 414–416 (STS).

Belongs to the adenylosuccinate synthetase family. Homodimer. Requires Mg(2+) as cofactor.

It is found in the cytoplasm. The enzyme catalyses IMP + L-aspartate + GTP = N(6)-(1,2-dicarboxyethyl)-AMP + GDP + phosphate + 2 H(+). It functions in the pathway purine metabolism; AMP biosynthesis via de novo pathway; AMP from IMP: step 1/2. Plays an important role in the de novo pathway of purine nucleotide biosynthesis. Catalyzes the first committed step in the biosynthesis of AMP from IMP. This Jannaschia sp. (strain CCS1) protein is Adenylosuccinate synthetase.